Reading from the N-terminus, the 222-residue chain is MKAVILLSGGLDSSTVLYQAKADGCECYAISFDYQQRHLRELDSAKKIADTVGVIEHHIVSFDLRSWGGSALTDSQIDLPSDRDLEEMSQNIPITYVPARNTIFLSFALAYAEVVNASRVYIGVNALDYSGYPDCRPDYILAMQEVFRLGTRQGREGEAIAIVAPLIEMKKTEIIQLGNSLGVPWEKTWSCYAGGEKPCGICDSCKLRLTAFQELGLTDPLM.

7 to 17 is an ATP binding site; the sequence is LSGGLDSSTVL. Positions 191, 199, 202, and 205 each coordinate Zn(2+).

Belongs to the QueC family. The cofactor is Zn(2+).

It catalyses the reaction 7-carboxy-7-deazaguanine + NH4(+) + ATP = 7-cyano-7-deazaguanine + ADP + phosphate + H2O + H(+). It functions in the pathway purine metabolism; 7-cyano-7-deazaguanine biosynthesis. Functionally, catalyzes the ATP-dependent conversion of 7-carboxy-7-deazaguanine (CDG) to 7-cyano-7-deazaguanine (preQ(0)). This is 7-cyano-7-deazaguanine synthase from Trichodesmium erythraeum (strain IMS101).